The chain runs to 556 residues: Glycosyl hydrolase 5 family protein (556 aa).

Positions 1-28 (MTSAGVAPTALRLLTALLLLLVAAPSHS) are cleaved as a signal peptide. N-linked (GlcNAc...) asparagine glycosylation is found at asparagine 102 and asparagine 113. The Proton donor/acceptor role is filled by glutamate 208. Residues asparagine 212, asparagine 290, and asparagine 307 are each glycosylated (N-linked (GlcNAc...) asparagine). Catalysis depends on glutamate 473, which acts as the Nucleophile. Asparagine 474 and asparagine 479 each carry an N-linked (GlcNAc...) asparagine glycan.

Belongs to the glycosyl hydrolase 5 (cellulase A) family. In terms of processing, glycosylated.

Functionally, may have glycosyl hydrolase activity. This is Glycosyl hydrolase 5 family protein from Chamaecyparis obtusa (Hinoki false-cypress).